Consider the following 269-residue polypeptide: Probable ribosomal RNA small subunit methyltransferase A (269 aa).

Positions 19, 21, 46, 67, 92, and 107 each coordinate S-adenosyl-L-methionine.

Belongs to the class I-like SAM-binding methyltransferase superfamily. rRNA adenine N(6)-methyltransferase family. RsmA subfamily.

It localises to the cytoplasm. In terms of biological role, specifically dimethylates two adjacent adenosines in the loop of a conserved hairpin near the 3'-end of 16S rRNA in the 30S particle. May play a critical role in biogenesis of 30S subunits. The chain is Probable ribosomal RNA small subunit methyltransferase A from Methanosarcina acetivorans (strain ATCC 35395 / DSM 2834 / JCM 12185 / C2A).